Here is a 565-residue protein sequence, read N- to C-terminus: Wee1-like protein kinase 2 (565 aa).

One can recognise a Protein kinase domain in the interval 217 to 493 (FLELERIGVG…TKHPILRPSL (277 aa)). ATP-binding positions include 223–231 (IGVGEFGSV) and K246. D344 (proton acceptor) is an active-site residue. Mg(2+) is bound by residues N349 and D383. Residues 496–522 (AVQLQKQLNVEKCKTAMLERELKAARL) adopt a coiled-coil conformation. The disordered stretch occupies residues 531–553 (PLGNANLQESETSPKKNNKRLVG).

This sequence belongs to the protein kinase superfamily. Ser/Thr protein kinase family. WEE1 subfamily.

The protein localises to the nucleus. The catalysed reaction is L-tyrosyl-[protein] + ATP = O-phospho-L-tyrosyl-[protein] + ADP + H(+). Oocyte-specific protein tyrosine kinase that phosphorylates and inhibits CDK1 and acts as a key regulator of meiosis. Required to maintain meiotic arrest in oocytes by phosphorylating CDK1 at 'Tyr-15', leading to inhibit CDK1 activity and prevent meiotic reentry. This Gallus gallus (Chicken) protein is Wee1-like protein kinase 2 (WEE2).